We begin with the raw amino-acid sequence, 303 residues long: US1 protein (303 aa).

Positions 230-284 are disordered; sequence IPAPGRPLPRRRPSEGGMRAPRRRSRAPAPARSTAAAATPPRPGDPRAPAARRAG. Low complexity predominate over residues 256–268; it reads APAPARSTAAAAT.

It belongs to the herpesviridae US2 family.

This chain is US1 protein (US1), found in Equine herpesvirus 1 (strain Kentucky A) (EHV-1).